Here is a 403-residue protein sequence, read N- to C-terminus: Phosphopentomutase (403 aa).

Mn(2+) contacts are provided by Asp13, Asp298, His303, Asp339, His340, and His351.

This sequence belongs to the phosphopentomutase family. Mn(2+) is required as a cofactor.

It localises to the cytoplasm. The enzyme catalyses 2-deoxy-alpha-D-ribose 1-phosphate = 2-deoxy-D-ribose 5-phosphate. It catalyses the reaction alpha-D-ribose 1-phosphate = D-ribose 5-phosphate. It participates in carbohydrate degradation; 2-deoxy-D-ribose 1-phosphate degradation; D-glyceraldehyde 3-phosphate and acetaldehyde from 2-deoxy-alpha-D-ribose 1-phosphate: step 1/2. Isomerase that catalyzes the conversion of deoxy-ribose 1-phosphate (dRib-1-P) and ribose 1-phosphate (Rib-1-P) to deoxy-ribose 5-phosphate (dRib-5-P) and ribose 5-phosphate (Rib-5-P), respectively. The protein is Phosphopentomutase of Streptococcus pyogenes serotype M4 (strain MGAS10750).